A 146-amino-acid polypeptide reads, in one-letter code: Superoxide dismutase [Mn] 2 (146 aa).

H42, D126, and H130 together coordinate Mn(2+).

It belongs to the iron/manganese superoxide dismutase family. It depends on Mn(2+) as a cofactor.

The enzyme catalyses 2 superoxide + 2 H(+) = H2O2 + O2. Destroys superoxide anion radicals which are normally produced within the cells and which are toxic to biological systems. In Haloferax mediterranei (Halobacterium mediterranei), this protein is Superoxide dismutase [Mn] 2 (sod2).